Reading from the N-terminus, the 76-residue chain is Small ribosomal subunit protein bS18 (76 aa).

The protein belongs to the bacterial ribosomal protein bS18 family. Part of the 30S ribosomal subunit. Forms a tight heterodimer with protein bS6.

Binds as a heterodimer with protein bS6 to the central domain of the 16S rRNA, where it helps stabilize the platform of the 30S subunit. This chain is Small ribosomal subunit protein bS18, found in Desulfitobacterium hafniense (strain Y51).